Consider the following 957-residue polypeptide: Mediator of RNA polymerase II transcription subunit 16 (957 aa).

The tract at residues 855 to 883 (YTEVDAAPSGKTNAQGPPQQPQPQQQRRR) is disordered.

This sequence belongs to the Mediator complex subunit 16 family. Component of the Mediator complex.

The protein resides in the nucleus. In terms of biological role, component of the Mediator complex, a coactivator involved in the regulated transcription of nearly all RNA polymerase II-dependent genes. Mediator functions as a bridge to convey information from gene-specific regulatory proteins to the basal RNA polymerase II transcription machinery. Mediator is recruited to promoters by direct interactions with regulatory proteins and serves as a scaffold for the assembly of a functional preinitiation complex with RNA polymerase II and the general transcription factors. The protein is Mediator of RNA polymerase II transcription subunit 16 (sin4) of Aspergillus clavatus (strain ATCC 1007 / CBS 513.65 / DSM 816 / NCTC 3887 / NRRL 1 / QM 1276 / 107).